Consider the following 89-residue polypeptide: Small ribosomal subunit protein uS15 (89 aa).

Belongs to the universal ribosomal protein uS15 family. Part of the 30S ribosomal subunit. Forms a bridge to the 50S subunit in the 70S ribosome, contacting the 23S rRNA.

One of the primary rRNA binding proteins, it binds directly to 16S rRNA where it helps nucleate assembly of the platform of the 30S subunit by binding and bridging several RNA helices of the 16S rRNA. In terms of biological role, forms an intersubunit bridge (bridge B4) with the 23S rRNA of the 50S subunit in the ribosome. The polypeptide is Small ribosomal subunit protein uS15 (Corynebacterium efficiens (strain DSM 44549 / YS-314 / AJ 12310 / JCM 11189 / NBRC 100395)).